The sequence spans 949 residues: Inactive atromentin synthetase invA3 (949 aa).

Residues 38-460 (RAVSQYPNHE…SGRIKDTVVV (423 aa)) are adenylation (A) domain. The Carrier domain occupies 592–670 (ALSTETEKTL…NLAKYVDSLV (79 aa)). The tract at residues 597 to 667 (TEKTLAGIYA…VISNLAKYVD (71 aa)) is thiolation and peptide carrier (T) domain. Ser629 carries the O-(pantetheine 4'-phosphoryl)serine modification. A thioesterase (TE) domain region spans residues 693 to 934 (PIFMVHPGMA…YTLMDFDHVA (242 aa)).

The protein belongs to the ATP-dependent AMP-binding enzyme family.

In terms of biological role, inactive atromentin synthetase homolog. While the invA3 adenylation (A) domain is capable of adenylating 4-hydroxyphenylpyruvate (4-HPP), the invA3 enzyme is inactive because of its non-functional thioesterase (TE) domain. The protein is Inactive atromentin synthetase invA3 (invA3) of Paxillus involutus (Naked brimcap).